The following is a 246-amino-acid chain: Probable septum site-determining protein MinC (246 aa).

It belongs to the MinC family. In terms of assembly, interacts with MinD and FtsZ.

Functionally, cell division inhibitor that blocks the formation of polar Z ring septums. Rapidly oscillates between the poles of the cell to destabilize FtsZ filaments that have formed before they mature into polar Z rings. Prevents FtsZ polymerization. The polypeptide is Probable septum site-determining protein MinC (Lachnospira eligens (strain ATCC 27750 / DSM 3376 / VPI C15-48 / C15-B4) (Eubacterium eligens)).